Reading from the N-terminus, the 418-residue chain is UDP-N-acetylglucosamine 1-carboxyvinyltransferase (418 aa).

23-24 (KN) provides a ligand contact to phosphoenolpyruvate. A UDP-N-acetyl-alpha-D-glucosamine-binding site is contributed by Arg-93. Asp-117 acts as the Proton donor in catalysis. UDP-N-acetyl-alpha-D-glucosamine is bound by residues Asp-305 and Ile-327.

The protein belongs to the EPSP synthase family. MurA subfamily.

The protein resides in the cytoplasm. The catalysed reaction is phosphoenolpyruvate + UDP-N-acetyl-alpha-D-glucosamine = UDP-N-acetyl-3-O-(1-carboxyvinyl)-alpha-D-glucosamine + phosphate. It participates in cell wall biogenesis; peptidoglycan biosynthesis. Its function is as follows. Cell wall formation. Adds enolpyruvyl to UDP-N-acetylglucosamine. The chain is UDP-N-acetylglucosamine 1-carboxyvinyltransferase from Corynebacterium jeikeium (strain K411).